Reading from the N-terminus, the 432-residue chain is Glutamyl-tRNA reductase (432 aa).

Substrate contacts are provided by residues 55 to 58 (TCNR), Ser-114, 119 to 121 (ETQ), and Gln-125. Cys-56 acts as the Nucleophile in catalysis. 194–199 (GAGEMI) provides a ligand contact to NADP(+).

The protein belongs to the glutamyl-tRNA reductase family. Homodimer.

The catalysed reaction is (S)-4-amino-5-oxopentanoate + tRNA(Glu) + NADP(+) = L-glutamyl-tRNA(Glu) + NADPH + H(+). The protein operates within porphyrin-containing compound metabolism; protoporphyrin-IX biosynthesis; 5-aminolevulinate from L-glutamyl-tRNA(Glu): step 1/2. Catalyzes the NADPH-dependent reduction of glutamyl-tRNA(Glu) to glutamate 1-semialdehyde (GSA). The chain is Glutamyl-tRNA reductase from Burkholderia ambifaria (strain ATCC BAA-244 / DSM 16087 / CCUG 44356 / LMG 19182 / AMMD) (Burkholderia cepacia (strain AMMD)).